Consider the following 154-residue polypeptide: Ribonuclease H (154 aa).

In terms of domain architecture, RNase H type-1 spans 5–146; the sequence is EQNIVYLYCD…ADELANRGID (142 aa). Mg(2+) contacts are provided by Asp-14, Glu-52, Asp-74, and Asp-138.

It belongs to the RNase H family. As to quaternary structure, monomer. Mg(2+) is required as a cofactor.

Its subcellular location is the cytoplasm. The enzyme catalyses Endonucleolytic cleavage to 5'-phosphomonoester.. Endonuclease that specifically degrades the RNA of RNA-DNA hybrids. The polypeptide is Ribonuclease H (Coxiella burnetii (strain CbuG_Q212) (Coxiella burnetii (strain Q212))).